The chain runs to 356 residues: Outer spore wall protein LDS2 (356 aa).

Residues 1–92 are Cytoplasmic-facing; that stretch reads MSTRPQPDWY…ISESVGNSDY (92 aa). A helical membrane pass occupies residues 93 to 113; the sequence is LHLFFLIFGYYLLNLLLIVAF. Over 114-115 the chain is Extracellular; it reads TS. The helical transmembrane segment at 116–136 threads the bilayer; sequence ILAWSLLVCIYLPFLGLFALP. Over 137–213 the chain is Cytoplasmic; the sequence is LAYMQTILIS…KRFYLVSLPQ (77 aa). Residues 214–234 form a helical membrane-spanning segment; the sequence is FFIFFFWYIFIAFMFLLLLLV. Residues 235 to 294 are Extracellular-facing; sequence PIVGPITINMLPFSPGMGFYYFEPYFVDVLHLDSRKLSKVYYKGFAKWLLYSISSGLLES. A helical membrane pass occupies residues 295–315; the sequence is IPILGGLFIGTNAVGASLWIV. At 316–356 the chain is on the cytoplasmic side; it reads KEIKDRDQPAVPPSPPAEPEEPTVGSYAPPIQQSIAHINPP. Positions 322 to 356 are disordered; the sequence is DQPAVPPSPPAEPEEPTVGSYAPPIQQSIAHINPP. Residues 346–356 are compositionally biased toward polar residues; sequence IQQSIAHINPP.

The protein belongs to the LDS family.

The protein resides in the prospore membrane. The protein localises to the lipid droplet. It localises to the spore wall. In terms of biological role, involved in spore wall assembly. The protein is Outer spore wall protein LDS2 of Saccharomyces cerevisiae (strain ATCC 204508 / S288c) (Baker's yeast).